The chain runs to 447 residues: Argininosuccinate synthase (447 aa).

ATP contacts are provided by residues 17–25 (AFSGGLDTS) and A43. L-citrulline is bound at residue Y99. ATP-binding residues include G129 and T131. T131, N135, and D136 together coordinate L-aspartate. L-citrulline is bound at residue N135. D136 serves as a coordination point for ATP. L-citrulline is bound by residues R139 and S192. D194 contributes to the ATP binding site. Residues T201, E203, and E280 each contribute to the L-citrulline site.

It belongs to the argininosuccinate synthase family. Type 2 subfamily. As to quaternary structure, homotetramer.

Its subcellular location is the cytoplasm. The catalysed reaction is L-citrulline + L-aspartate + ATP = 2-(N(omega)-L-arginino)succinate + AMP + diphosphate + H(+). It participates in amino-acid biosynthesis; L-arginine biosynthesis; L-arginine from L-ornithine and carbamoyl phosphate: step 2/3. This Salmonella dublin (strain CT_02021853) protein is Argininosuccinate synthase.